Here is a 127-residue protein sequence, read N- to C-terminus: Large ribosomal subunit protein bL17 (127 aa).

This sequence belongs to the bacterial ribosomal protein bL17 family. Part of the 50S ribosomal subunit. Contacts protein L32.

This chain is Large ribosomal subunit protein bL17, found in Vibrio vulnificus (strain CMCP6).